A 401-amino-acid chain; its full sequence is 3-oxoadipyl-CoA/3-oxo-5,6-dehydrosuberyl-CoA thiolase (401 aa).

Residue C90 is the Acyl-thioester intermediate of the active site. Catalysis depends on proton acceptor residues H357 and C387.

Belongs to the thiolase-like superfamily. Thiolase family.

It catalyses the reaction succinyl-CoA + acetyl-CoA = 3-oxoadipyl-CoA + CoA. The catalysed reaction is 2,3-didehydroadipoyl-CoA + acetyl-CoA = 3-oxo-5,6-didehydrosuberyl-CoA + CoA. Its pathway is aromatic compound metabolism; phenylacetate degradation. Its function is as follows. Catalyzes the thiolytic cleavage of the beta-keto C8 intermediate 3-oxo-5,6-dehydrosuberyl-CoA with CoA to yield the C6 intermediate 2,3-dehydroadipyl-CoA and acetyl-CoA. Besides it catalyzes also the last step of the pathway, in which 3-oxoadipyl-CoA similarly is cleaved to acetyl-CoA and succinyl-CoA. In Escherichia coli (strain K12), this protein is 3-oxoadipyl-CoA/3-oxo-5,6-dehydrosuberyl-CoA thiolase (paaJ).